The chain runs to 558 residues: NXPE family member 2 (558 aa).

A helical membrane pass occupies residues 17-37; it reads ASARKLFLIVLIIFVFWVVFM.

The protein belongs to the NXPE family.

The protein resides in the membrane. This chain is NXPE family member 2 (Nxpe2), found in Mus musculus (Mouse).